The primary structure comprises 133 residues: Holo-[acyl-carrier-protein] synthase (133 aa).

Mg(2+) is bound by residues Asp-8 and Glu-57.

Belongs to the P-Pant transferase superfamily. AcpS family. Mg(2+) is required as a cofactor.

It is found in the cytoplasm. It carries out the reaction apo-[ACP] + CoA = holo-[ACP] + adenosine 3',5'-bisphosphate + H(+). Transfers the 4'-phosphopantetheine moiety from coenzyme A to a Ser of acyl-carrier-protein. In Chelativorans sp. (strain BNC1), this protein is Holo-[acyl-carrier-protein] synthase.